The chain runs to 268 residues: Methionine aminopeptidase (268 aa).

Histidine 79 is a binding site for substrate. Aspartate 97, aspartate 108, and histidine 172 together coordinate a divalent metal cation. Residue histidine 179 participates in substrate binding. A divalent metal cation contacts are provided by glutamate 205 and glutamate 236.

This sequence belongs to the peptidase M24A family. Methionine aminopeptidase type 1 subfamily. In terms of assembly, monomer. Requires Co(2+) as cofactor. The cofactor is Zn(2+). Mn(2+) serves as cofactor. Fe(2+) is required as a cofactor.

It catalyses the reaction Release of N-terminal amino acids, preferentially methionine, from peptides and arylamides.. In terms of biological role, removes the N-terminal methionine from nascent proteins. The N-terminal methionine is often cleaved when the second residue in the primary sequence is small and uncharged (Met-Ala-, Cys, Gly, Pro, Ser, Thr, or Val). Requires deformylation of the N(alpha)-formylated initiator methionine before it can be hydrolyzed. This is Methionine aminopeptidase from Haemophilus influenzae (strain ATCC 51907 / DSM 11121 / KW20 / Rd).